A 186-amino-acid polypeptide reads, in one-letter code: ATP synthase subunit b, chloroplastic (186 aa).

The chain crosses the membrane as a helical span at residues 27-49; that stretch reads LATNPINLSVVLGVLIFFGKGVL.

This sequence belongs to the ATPase B chain family. In terms of assembly, F-type ATPases have 2 components, F(1) - the catalytic core - and F(0) - the membrane proton channel. F(1) has five subunits: alpha(3), beta(3), gamma(1), delta(1), epsilon(1). F(0) has four main subunits: a(1), b(1), b'(1) and c(10-14). The alpha and beta chains form an alternating ring which encloses part of the gamma chain. F(1) is attached to F(0) by a central stalk formed by the gamma and epsilon chains, while a peripheral stalk is formed by the delta, b and b' chains.

The protein localises to the plastid. The protein resides in the chloroplast thylakoid membrane. Its function is as follows. F(1)F(0) ATP synthase produces ATP from ADP in the presence of a proton or sodium gradient. F-type ATPases consist of two structural domains, F(1) containing the extramembraneous catalytic core and F(0) containing the membrane proton channel, linked together by a central stalk and a peripheral stalk. During catalysis, ATP synthesis in the catalytic domain of F(1) is coupled via a rotary mechanism of the central stalk subunits to proton translocation. Component of the F(0) channel, it forms part of the peripheral stalk, linking F(1) to F(0). The sequence is that of ATP synthase subunit b, chloroplastic from Illicium oligandrum (Star anise).